A 425-amino-acid polypeptide reads, in one-letter code: Probable mannosyltransferase KTR2 (425 aa).

The Cytoplasmic portion of the chain corresponds to 1–13; the sequence is MQICKVFLTQVKK. Residues 14–33 traverse the membrane as a helical; Signal-anchor for type II membrane protein segment; sequence LLFVSLLFCLIAQTCWLALV. Residues 34 to 89 are stem region; it reads PYQRQLSLDSYFFRRSREVSSRYDFTRRRHMNQTLKLSSNTYNDEPLNKTKGIKNQ. The Lumenal segment spans residues 34–425; the sequence is PYQRQLSLDS…SGKYFLKHDS (392 aa). 4 N-linked (GlcNAc...) asparagine glycosylation sites follow: Asn65, Asn81, Asn92, and Asn167. Residues 90–425 form a catalytic region; it reads RENATLLMLV…SGKYFLKHDS (336 aa). The active-site Nucleophile is the Glu313.

The protein belongs to the glycosyltransferase 15 family.

Its subcellular location is the golgi apparatus membrane. Its pathway is protein modification; protein glycosylation. Involved in N-linked glycosylation. Transfers an alpha-D-mannosyl residue from GDP-mannose into lipid-linked oligosaccharide, forming an alpha-(1-&gt;2)-D-mannosyl-D-mannose linkage. This Saccharomyces cerevisiae (strain ATCC 204508 / S288c) (Baker's yeast) protein is Probable mannosyltransferase KTR2 (KTR2).